The chain runs to 965 residues: Collagen alpha-1(I) chain (965 aa).

Pro residues predominate over residues 1-21; sequence SVPGPMGPSGPRGLPGPPGPG. A disordered region spans residues 1–965; it reads SVPGPMGPSG…PGPPGPPGPP (965 aa). 11 positions are modified to 4-hydroxyproline: P15, P18, P20, P29, P32, P35, P49, P64, P70, P79, and P85. Residues 52–66 show a composition bias toward basic and acidic residues; it reads NGDDGEAGKPGRPGE. K88 bears the 5-hydroxylysine; alternate mark. O-linked (Gal...) hydroxylysine; alternate glycosylation occurs at K88. Phosphoserine is present on S94. Residues 102-118 show a composition bias toward low complexity; that stretch reads DAGPAGPKGEPGSPGEN. 4-hydroxyproline occurs at positions 112, 115, 121, 130, 136, 157, 166, 169, 196, 199, 211, 217, 226, 232, 235, and 250. Over residues 136–154 the composition is skewed to low complexity; it reads PGASGPAGARGNDGATGAA. Pro residues predominate over residues 156–168; the sequence is PPGPTGPAGPPGF. Residues 202-241 show a composition bias toward low complexity; the sequence is AGAAGPAGNPGADGQPGAKGANGAPGIAGAPGFPGARGPS. The residue at position 253 (K253) is a 5-hydroxylysine. 4-hydroxyproline is present on residues P259, P262, P273, P282, P297, P303, P312, and P318. A compositionally biased stretch (gly residues) spans 307–327; that stretch reads GERGGPGSRGFPGADGAGPKG. K326 is modified (5-hydroxylysine). 23 positions are modified to 4-hydroxyproline: P335, P344, P350, P356, P365, P368, P377, P386, P392, P404, P413, P422, P425, P443, P460, P466, P472, P480, P492, P501, P509, P515, and P524. A compositionally biased stretch (low complexity) spans 359–385; it reads KGLTGSPGSPGPDGKTGPPGPAGQDGR. A compositionally biased stretch (low complexity) spans 394-413; it reads ARGQAGVMGFPGPKGAAGEP. A compositionally biased stretch (low complexity) spans 472 to 482; sequence PGEADLGAPGP. At K536 the chain carries 5-hydroxylysine. A 4-hydroxyproline mark is found at P542, P557, and P563. Residues 569–583 are compositionally biased toward low complexity; that stretch reads SGPSGPAGPTGARGA. S572 bears the Phosphoserine mark. 4-hydroxyproline is present on residues P584, P590, P593, P602, P608, P626, P635, and P644. A compositionally biased stretch (low complexity) spans 596 to 623; it reads AGFAGPPGADGQPGAKGEPGDAGAKGDA. Positions 625–637 are enriched in pro residues; the sequence is PPGPAGPTGPPGP. The residue at position 647 (K647) is a 5-hydroxylysine. Residues 652 to 668 show a composition bias toward low complexity; it reads SAGPPGATGFPGAAGRV. 2 positions are modified to 4-hydroxyproline: P656 and P662. 3-hydroxyproline is present on P670. 16 positions are modified to 4-hydroxyproline: P671, P680, P683, P704, P713, P721, P730, P748, P757, P760, P766, P771, P777, P783, P791, and P797. Low complexity predominate over residues 697-706; it reads ETGPAGRPGE. The span at 718–730 shows a compositional bias: low complexity; it reads KGSPGADGPAGAP. Positions 768–780 are enriched in pro residues; sequence KGPPGPMGPPGLA. K806 carries the 5-hydroxylysine modification. Positions 815–830 are enriched in pro residues; that stretch reads SGPPGAPGAPGAPGPV. A 4-hydroxyproline mark is found at P818, P821, and P824. Over residues 851–865 the composition is skewed to low complexity; the sequence is AGPAGARGPAGPQGP. The segment covering 866–880 has biased composition (basic and acidic residues); it reads RGDKGETGEQGDRGI. Residue K869 is modified to 5-hydroxylysine. A 5-hydroxylysine; alternate modification is found at K881. An O-linked (Gal...) hydroxylysine; alternate glycan is attached at K881. A 4-hydroxyproline mark is found at P896, P899, P917, and P932. A compositionally biased stretch (low complexity) spans 899-932; that stretch reads PGEQGPSGASGPAGPRGPPGSAGSPGKDGLNGLP. P937 carries the 3-hydroxyproline modification. Position 938 is a 4-hydroxyproline (P938). The segment covering 950–965 has biased composition (pro residues); the sequence is VGPPGPPGPPGPPGPP. P952 is modified (3-hydroxyproline). At P953 the chain carries 4-hydroxyproline. The residue at position 955 (P955) is a 3-hydroxyproline. The residue at position 956 (P956) is a 4-hydroxyproline. The residue at position 958 (P958) is a 3-hydroxyproline. A 4-hydroxyproline mark is found at P959, P962, and P965.

It belongs to the fibrillar collagen family. As to quaternary structure, trimers of one alpha 2(I) and two alpha 1(I) chains. In terms of processing, contains mostly 4-hydroxyproline. Proline residues at the third position of the tripeptide repeating unit (G-X-Y) are hydroxylated in some or all of the chains. Post-translationally, contains 3-hydroxyproline at a few sites. This modification occurs on the first proline residue in the sequence motif Gly-Pro-Hyp, where Hyp is 4-hydroxyproline. Lysine residues at the third position of the tripeptide repeating unit (G-X-Y) are 5-hydroxylated in some or all of the chains. In terms of processing, O-glycosylated on hydroxylated lysine residues. The O-linked glycan consists of a Glc-Gal disaccharide. As to expression, expressed in bones.

The protein localises to the secreted. The protein resides in the extracellular space. It localises to the extracellular matrix. Type I collagen is a member of group I collagen (fibrillar forming collagen). The chain is Collagen alpha-1(I) chain from Scelidotherium sp. (strain SLP-2019) (South American ground sloth).